Reading from the N-terminus, the 348-residue chain is VIP36-like protein (348 aa).

An N-terminal signal peptide occupies residues 1 to 44 (MAATLGPLGSWQQWRRCLSARDGSRMLLLLLLLGSGQGPQQVGA). Over 45 to 313 (GQTFEYLKRE…APLPPLSGLA (269 aa)) the chain is Lumenal. The 226-residue stretch at 49–274 (EYLKREHSLS…DVISLKLFEL (226 aa)) folds into the L-type lectin-like domain. The a carbohydrate site is built by Ser-93 and Asp-128. Ca(2+) is bound by residues Asp-159, Tyr-161, and Asn-163. 161 to 163 (YPN) lines the a carbohydrate pocket. Asn-181 is a glycosylation site (N-linked (GlcNAc...) (high mannose) asparagine). Residue His-188 participates in a carbohydrate binding. A Ca(2+)-binding site is contributed by Asp-191. An intrachain disulfide couples Cys-200 to Cys-237. 258 to 260 (GDL) provides a ligand contact to a carbohydrate. Residues 314–336 (LFLIVFFSLVFSVFAIVIGIILY) form a helical membrane-spanning segment. Topologically, residues 337–348 (NKWQEQSRKRFY) are cytoplasmic. Residues 344–346 (RKR) carry the Endoplasmic reticulum retention signal motif.

In terms of tissue distribution, expressed in numerous tissues. Highest expression in skeletal muscle and kidney, intermediate levels in heart, liver and placenta, low levels in brain, thymus, spleen, small intestine and lung.

The protein resides in the endoplasmic reticulum membrane. It localises to the golgi apparatus membrane. Its function is as follows. May be involved in the regulation of export from the endoplasmic reticulum of a subset of glycoproteins. May function as a regulator of ERGIC-53. This is VIP36-like protein (LMAN2L) from Homo sapiens (Human).